The sequence spans 1034 residues: Tubulin glycylase 3D (1034 aa).

2 stretches are compositionally biased toward polar residues: residues 1–13 and 131–146; these read MINSHHTSQQTLN and QVNSVLADNSNIQNDF. Disordered stretches follow at residues 1–21, 131–166, and 189–208; these read MINSHHTSQQTLNKESKSQMD, QVNSVLADNSNIQNDFYPQYRKPKNPTTKKRQSTDY, and LNQQNQQQQDLAKNRVDNSQ. Positions 151–161 are enriched in basic residues; it reads RKPKNPTTKKR. Low complexity predominate over residues 189–199; that stretch reads LNQQNQQQQDL. The TTL domain occupies 571–930; sequence DINNVIDDEK…YGMAQKSGIK (360 aa). ATP contacts are provided by residues 741 to 744, Lys-754, and Asp-756; that span reads QKYI. Residues 1002–1034 are disordered; the sequence is HDQKQFSSQQANNIETYSRPQTAKSQTQSSKKL.

It localises to the cytoplasm. In terms of biological role, probable glycylase which modifies tubulin, generating side chains of glycine on the gamma-carboxyl groups of specific glutamate residues within the C-terminal tail of tubulin. The polypeptide is Tubulin glycylase 3D (TTLL3D) (Tetrahymena thermophila (strain SB210)).